The following is a 58-amino-acid chain: Protein translocase subunit SecE (58 aa).

A helical membrane pass occupies residues 38–58 (IVMAFVGLLAYLIQLVLAFII).

Belongs to the SecE/SEC61-gamma family. Component of the Sec protein translocase complex. Heterotrimer consisting of SecY (alpha), SecG (beta) and SecE (gamma) subunits. The heterotrimers can form oligomers, although 1 heterotrimer is thought to be able to translocate proteins. Interacts with the ribosome. May interact with SecDF, and other proteins may be involved.

The protein localises to the cell membrane. Essential subunit of the Sec protein translocation channel SecYEG. Clamps together the 2 halves of SecY. May contact the channel plug during translocation. The protein is Protein translocase subunit SecE of Acidianus ambivalens (Desulfurolobus ambivalens).